The following is a 402-amino-acid chain: MATQASVEWIFNVAGSAASASLAKSIKDAGGSEDFAKYVVARFYDNYKDSIDDSGIYNACMGRARTVDKALNDSRLAERNEEWHTNLATIRRLDLELAELKLMLSNLGMKREERVLNSMFSVTREEGRSSNVVMLKQNAVKMIEEGKLKIKVEKNENYTESLKNKIEELECIIGAFEKGKEINIALDAMTGEVRLDGDSCSYNSTAAFVSTIMGTPIKMYDESNKPLFDVGKYINPKHVIDKMIESEIPIFKSDYRNNESPDFDAWNENSNLKIVSVNDCHAICVFKFENEWWCFDDGRLRKYNGIGNPLIVANSKFQIDRILISGDIELNPGPNALVKLNDCITKYNLKIICTFDVNLDDDGSIMYICYLKVGSAEATGNGCSKKEAKRRAAVSILDQLGM.

Coiled-coil stretches lie at residues 87-113 (LATI…KREE) and 147-181 (KLKI…KGKE). The region spanning 334–402 (PNALVKLNDC…AVSILDQLGM (69 aa)) is the DRBM domain.

It belongs to the rotavirus NSP3 family.

It localises to the host cytoplasm. Its function is as follows. May play a role in stimulating the translation of viral mRNAs. This Bos taurus (Bovine) protein is Non-structural protein 3.